The chain runs to 353 residues: Photosystem II D2 protein (353 aa).

Position 2 is an N-acetylthreonine (Thr2). At Thr2 the chain carries Phosphothreonine. Residues Cys41 to Thr61 traverse the membrane as a helical segment. His118 contributes to the chlorophyll a binding site. A helical transmembrane segment spans residues Gly125–Pro141. Residues Gln130 and Asn143 each contribute to the pheophytin a site. Residues Val153 to Ser166 form a helical membrane-spanning segment. Chlorophyll a is bound at residue His198. The chain crosses the membrane as a helical span at residues Ala208 to Asp228. Residues His215 and Phe262 each contribute to the a plastoquinone site. His215 contributes to the Fe cation binding site. His269 provides a ligand contact to Fe cation. Residues Gly279–Arg295 form a helical membrane-spanning segment.

The protein belongs to the reaction center PufL/M/PsbA/D family. PSII is composed of 1 copy each of membrane proteins PsbA, PsbB, PsbC, PsbD, PsbE, PsbF, PsbH, PsbI, PsbJ, PsbK, PsbL, PsbM, PsbT, PsbX, PsbY, PsbZ, Psb30/Ycf12, at least 3 peripheral proteins of the oxygen-evolving complex and a large number of cofactors. It forms dimeric complexes. Requires The D1/D2 heterodimer binds P680, chlorophylls that are the primary electron donor of PSII, and subsequent electron acceptors. It shares a non-heme iron and each subunit binds pheophytin, quinone, additional chlorophylls, carotenoids and lipids. There is also a Cl(-1) ion associated with D1 and D2, which is required for oxygen evolution. The PSII complex binds additional chlorophylls, carotenoids and specific lipids. as cofactor.

It localises to the plastid. The protein resides in the chloroplast thylakoid membrane. It carries out the reaction 2 a plastoquinone + 4 hnu + 2 H2O = 2 a plastoquinol + O2. Photosystem II (PSII) is a light-driven water:plastoquinone oxidoreductase that uses light energy to abstract electrons from H(2)O, generating O(2) and a proton gradient subsequently used for ATP formation. It consists of a core antenna complex that captures photons, and an electron transfer chain that converts photonic excitation into a charge separation. The D1/D2 (PsbA/PsbD) reaction center heterodimer binds P680, the primary electron donor of PSII as well as several subsequent electron acceptors. D2 is needed for assembly of a stable PSII complex. This chain is Photosystem II D2 protein, found in Lactuca sativa (Garden lettuce).